A 231-amino-acid polypeptide reads, in one-letter code: 2-amino-5-formylamino-6-ribosylaminopyrimidin-4(3H)-one 5'-monophosphate deformylase (231 aa).

Residues Glu29, His31, Asp40, and His110 each contribute to the Fe cation site.

This sequence belongs to the creatininase superfamily. FAPy deformylase family. As to quaternary structure, homodimer. Requires Fe(2+) as cofactor. Zn(2+) serves as cofactor.

The enzyme catalyses 2-amino-5-formylamino-6-(5-phospho-D-ribosylamino)pyrimidin-4(3H)-one + H2O = 2,5-diamino-6-(1-D-ribosylamino)pyrimidin-4(3H)-one 5'-phosphate + formate + H(+). The protein operates within cofactor biosynthesis; coenzyme F420 biosynthesis. Its pathway is cofactor biosynthesis; riboflavin biosynthesis. Functionally, catalyzes the hydrolysis of the formamide of 2-amino-5-formylamino-6-ribosylamino-4(3H)-pyrimidinone 5'-monophosphate (FAPy) to form 2,5-diamino-6-ribosylamino-4(3H)-pyrimidinone 5'-phosphate (APy). In Methanothermobacter marburgensis (strain ATCC BAA-927 / DSM 2133 / JCM 14651 / NBRC 100331 / OCM 82 / Marburg) (Methanobacterium thermoautotrophicum), this protein is 2-amino-5-formylamino-6-ribosylaminopyrimidin-4(3H)-one 5'-monophosphate deformylase.